The primary structure comprises 190 residues: ATP synthase subunit C lysine N-methyltransferase (190 aa).

It belongs to the ANT/ATPSC lysine N-methyltransferase family.

It is found in the mitochondrion. It carries out the reaction L-lysyl-[protein] + 3 S-adenosyl-L-methionine = N(6),N(6),N(6)-trimethyl-L-lysyl-[protein] + 3 S-adenosyl-L-homocysteine + 3 H(+). Its function is as follows. Mitochondrial protein-lysine N-methyltransferase that trimethylates ATP synthase subunit C. Trimethylation is required for proper incorporation of the C subunit into the ATP synthase complex and mitochondrial respiration. The protein is ATP synthase subunit C lysine N-methyltransferase of Caenorhabditis elegans.